Here is a 142-residue protein sequence, read N- to C-terminus: Coactosin-like protein (142 aa).

The residue at position 2 (Ala2) is an N-acetylalanine. Residues 2–130 (ATKIDKEACR…EEDFIRSELK (129 aa)) form the ADF-H domain. Residues 66-75 (TGDAMSKRSK) are flexible and important for F-actin binding. Lys102 carries the N6-acetyllysine modification. Ser141 is subject to Phosphoserine.

This sequence belongs to the actin-binding proteins ADF family. Coactosin subfamily. Interacts with 5-lipoxygenase (ALOX5/5LO) in a calcium-independent manner. Binds to F-actin with a stoichiometry of 1:2.

Its subcellular location is the cytoplasm. It localises to the cytoskeleton. It is found in the nucleus. In terms of biological role, binds to F-actin in a calcium-independent manner. Has no direct effect on actin depolymerization. Acts as a chaperone for ALOX5 (5LO), influencing both its stability and activity in leukotrienes synthesis. The sequence is that of Coactosin-like protein (Cotl1) from Mus musculus (Mouse).